A 199-amino-acid polypeptide reads, in one-letter code: 7-methyl-GTP pyrophosphatase (199 aa).

Residue Asp-76 is the Proton acceptor of the active site.

It belongs to the Maf family. YceF subfamily. Requires a divalent metal cation as cofactor.

The protein resides in the cytoplasm. It catalyses the reaction N(7)-methyl-GTP + H2O = N(7)-methyl-GMP + diphosphate + H(+). Its function is as follows. Nucleoside triphosphate pyrophosphatase that hydrolyzes 7-methyl-GTP (m(7)GTP). May have a dual role in cell division arrest and in preventing the incorporation of modified nucleotides into cellular nucleic acids. The protein is 7-methyl-GTP pyrophosphatase of Rhizobium johnstonii (strain DSM 114642 / LMG 32736 / 3841) (Rhizobium leguminosarum bv. viciae).